The following is a 115-amino-acid chain: Nucleoid-associated protein LA_4332 (115 aa).

This sequence belongs to the YbaB/EbfC family. As to quaternary structure, homodimer.

The protein localises to the cytoplasm. Its subcellular location is the nucleoid. Binds to DNA and alters its conformation. May be involved in regulation of gene expression, nucleoid organization and DNA protection. This is Nucleoid-associated protein LA_4332 from Leptospira interrogans serogroup Icterohaemorrhagiae serovar Lai (strain 56601).